Here is a 355-residue protein sequence, read N- to C-terminus: Isopentenyl-diphosphate delta-isomerase (355 aa).

12–13 (RK) contacts substrate. FMN is bound by residues S70, 71–73 (SMT), S101, and N130. 101–103 (SMR) contributes to the substrate binding site. Substrate is bound at residue Q165. Position 166 (E166) interacts with Mg(2+). FMN contacts are provided by residues K197 and 308–309 (AG).

It belongs to the IPP isomerase type 2 family. As to quaternary structure, homooctamer. Dimer of tetramers. Requires FMN as cofactor. NADPH is required as a cofactor. It depends on Mg(2+) as a cofactor.

It is found in the cytoplasm. It catalyses the reaction isopentenyl diphosphate = dimethylallyl diphosphate. In terms of biological role, involved in the biosynthesis of isoprenoids. Catalyzes the 1,3-allylic rearrangement of the homoallylic substrate isopentenyl (IPP) to its allylic isomer, dimethylallyl diphosphate (DMAPP). This Chlorobium phaeovibrioides (strain DSM 265 / 1930) (Prosthecochloris vibrioformis (strain DSM 265)) protein is Isopentenyl-diphosphate delta-isomerase.